Here is a 148-residue protein sequence, read N- to C-terminus: Deoxyuridine 5'-triphosphate nucleotidohydrolase (148 aa).

Substrate-binding positions include 67-69, Asn80, 84-86, and Met94; these read RSG and LID.

Belongs to the dUTPase family. Mg(2+) serves as cofactor.

The enzyme catalyses dUTP + H2O = dUMP + diphosphate + H(+). The protein operates within pyrimidine metabolism; dUMP biosynthesis; dUMP from dCTP (dUTP route): step 2/2. This enzyme is involved in nucleotide metabolism: it produces dUMP, the immediate precursor of thymidine nucleotides and it decreases the intracellular concentration of dUTP so that uracil cannot be incorporated into DNA. The protein is Deoxyuridine 5'-triphosphate nucleotidohydrolase of Francisella tularensis subsp. holarctica (strain FTNF002-00 / FTA).